The chain runs to 200 residues: RPW8-like protein 4 (200 aa).

In terms of domain architecture, RPW8 spans 1 to 157 (MPIAELAVIK…MKAIQVDQWT (157 aa)). A helical membrane pass occupies residues 7 to 29 (AVIKTVGGPLIAAALGVGAQVIY). Residues 70–127 (REVHESLTRLLEDAKSIIEKYWKLRWSRHVCRKYRYIKKLESIELELVRVAREIQVHQ) are a coiled coil.

Belongs to the plant RPW8 protein family.

The protein resides in the membrane. Probable disease resistance (R) protein. This is RPW8-like protein 4 (HR4) from Arabidopsis thaliana (Mouse-ear cress).